A 228-amino-acid polypeptide reads, in one-letter code: E3 ubiquitin-protein ligase RNF114 (228 aa).

An RING-type zinc finger spans residues 29–68; that stretch reads CPVCLEVYEKPVQVPCGHVFCSACLQECLKPKKPVCGVCR. Zn(2+) contacts are provided by C91 and C94. The C2HC RNF-type zinc finger occupies 91 to 110; sequence CHGCRKNFFLSKIRAHVATC. The residue at position 102 (K102) is an N6-acetyllysine. Zn(2+) contacts are provided by H106 and C110. At K112 the chain carries N6-acetyllysine.

Interacts with XAF1, the interaction increases XAF1 stability and proapoptotic effects, and may regulate IFN signaling. Autoubiquitinated. Polyubiquitinated in the presence of E2 enzymes UBE2D1, UBE2D2 and UBE2D3, but only monoubiquitinated in the presence of UBE2E1.

Its subcellular location is the cytoplasm. The protein localises to the nucleus. The enzyme catalyses S-ubiquitinyl-[E2 ubiquitin-conjugating enzyme]-L-cysteine + [acceptor protein]-L-lysine = [E2 ubiquitin-conjugating enzyme]-L-cysteine + N(6)-ubiquitinyl-[acceptor protein]-L-lysine.. The protein operates within protein modification; protein ubiquitination. Its function is as follows. E3 ubiquitin-protein ligase that promotes the ubiquitination of various substrates. In turn, participates in the regulation of many biological processes including cell cycle, apoptosis, osteoclastogenesis as well as innate or adaptive immunity. Acts as negative regulator of NF-kappa-B-dependent transcription by promoting the ubiquitination and stabilization of the NF-kappa-B inhibitor TNFAIP3. May promote the ubiquitination of TRAF6 as well. Also acts as a negative regulator of T-cell activation. Inhibits cellular dsRNA responses and interferon production by targeting MAVS component for proteasomal degradation. Ubiquitinates the CDK inhibitor CDKN1A leading to its degradationand probably also CDKN1B and CDKN1C. This activity stimulates cell cycle G1-to-S phase transition and suppresses cellular senescence. May play a role in spermatogenesis. Inhibits classical swine fever virus replication by mediating 'K27'-linked ubiquitination of viral NS4B and inducing its degradation via the proteasome. The chain is E3 ubiquitin-protein ligase RNF114 (RNF114) from Sus scrofa (Pig).